We begin with the raw amino-acid sequence, 551 residues long: Serine beta-lactamase-like protein LACTB, mitochondrial (551 aa).

Residues 1-113 (MYRLLSSVTA…RAIESSRDLL (113 aa)) constitute a mitochondrion transit peptide. Residues 69–101 (PADPEASGTTELSHEQALSPGSPHTPAPPAARG) are disordered. Serine 162 serves as the catalytic Acyl-ester intermediate. Residues 237 to 287 (LKMVKGTPPPSDQEKELKEKGGKNNEKSDAPKAKVEQDSEARCRSAKPGKK) are disordered. A compositionally biased stretch (basic and acidic residues) spans 248–279 (DQEKELKEKGGKNNEKSDAPKAKVEQDSEARC). N6-succinyllysine occurs at positions 287 and 288. An N6-acetyllysine mark is found at lysine 301 and lysine 346.

The protein belongs to the peptidase S12 family. Expressed predominantly in liver.

The protein resides in the mitochondrion. Functionally, mitochondrial serine protease that acts as a regulator of mitochondrial lipid metabolism. Acts by decreasing protein levels of PISD, a mitochondrial enzyme that converts phosphatidylserine (PtdSer) to phosphatidylethanolamine (PtdEtn), thereby affecting mitochondrial lipid metabolism. It is unclear whether it acts directly by mediating proteolysis of PISD or by mediating proteolysis of another lipid metabolism protein. Acts as a tumor suppressor that has the ability to inhibit proliferation of multiple types of cancer cells: probably by promoting decreased levels of PISD, thereby affecting mitochondrial lipid metabolism. This Mus musculus (Mouse) protein is Serine beta-lactamase-like protein LACTB, mitochondrial.